The chain runs to 503 residues: AMP phosphorylase (503 aa).

AMP is bound by residues Gly-168, 194–199, and Thr-203; that span reads SRAITS. The active-site Proton donor is Asp-256. Ser-264 and Lys-288 together coordinate AMP.

This sequence belongs to the thymidine/pyrimidine-nucleoside phosphorylase family. Type 2 subfamily.

It catalyses the reaction AMP + phosphate = alpha-D-ribose 1,5-bisphosphate + adenine. It carries out the reaction CMP + phosphate = cytosine + alpha-D-ribose 1,5-bisphosphate. The catalysed reaction is UMP + phosphate = alpha-D-ribose 1,5-bisphosphate + uracil. Catalyzes the conversion of AMP and phosphate to adenine and ribose 1,5-bisphosphate (R15P). Exhibits phosphorylase activity toward CMP and UMP in addition to AMP. Functions in an archaeal AMP degradation pathway, together with R15P isomerase and RubisCO. In Methanocaldococcus jannaschii (strain ATCC 43067 / DSM 2661 / JAL-1 / JCM 10045 / NBRC 100440) (Methanococcus jannaschii), this protein is AMP phosphorylase.